Here is a 118-residue protein sequence, read N- to C-terminus: uncharacterized protein (118 aa).

The next 4 membrane-spanning stretches (helical) occupy residues 5 to 20, 25 to 42, 53 to 73, and 83 to 103; these read IVFY…SVVM, VIRT…LLYF, ALAI…FIIL, and LFFT…SLSI.

It localises to the cell membrane. This is an uncharacterized protein from Bacillus subtilis (strain 168).